We begin with the raw amino-acid sequence, 532 residues long: Hepatocyte nuclear factor 1-beta-B (532 aa).

The tract at residues 1 to 35 (MFTDMVSKLTSLQQELLSALLDSGVTKDVLVQALE) is dimerization. The HNF-p1 domain maps to 5 to 36 (MVSKLTSLQQELLSALLDSGVTKDVLVQALED). Residues 74 to 95 (TGAQGKGGKLSGDEGSEDGDDF) form a disordered region. The 96-residue stretch at 102–197 (RELQSLNTEE…IDRQFDRVQG (96 aa)) folds into the POU-specific atypical domain. The span at 222–231 (SSGAAGGSGA) shows a compositional bias: gly residues. Disordered regions lie at residues 222 to 245 (SSGA…KRMR) and 500 to 532 (EAGQ…LQAW). Positions 244-324 (MRRNRFKWGP…NRRKEEAFRQ (81 aa)) form a DNA-binding region, homeobox; HNF1-type. Residues 505–532 (SHPSRYSTMDSSTITHLGSSKQCPLQAW) are compositionally biased toward polar residues.

This sequence belongs to the HNF1 homeobox family. As to quaternary structure, binds DNA as a dimer. Can form homodimer or heterodimer with HNF1-alpha. First expressed at stage 10 in the intermediate mesoderm. Expressed in rhombomere r5 by 14 hpf with expression diminishing by 18 hpf.

It is found in the nucleus. Functionally, transcription factor that binds to the inverted palindrome 5'-GTTAATNATTAAC-3'. Acts downstream of hnf1ba but is not required for induction of rhombomere r5/r6 gene expression in the hindbrain. The polypeptide is Hepatocyte nuclear factor 1-beta-B (Danio rerio (Zebrafish)).